A 210-amino-acid polypeptide reads, in one-letter code: Protein RFS1 (210 aa).

A Flavodoxin-like domain is found at 4-203 (VAILIYSVDD…RVHQLQGKAF (200 aa)).

This sequence belongs to the WrbA family.

It is found in the cytoplasm. It localises to the membrane raft. The sequence is that of Protein RFS1 (RFS1) from Saccharomyces cerevisiae (strain ATCC 204508 / S288c) (Baker's yeast).